The sequence spans 95 residues: Co-chaperonin GroES (95 aa).

Belongs to the GroES chaperonin family. In terms of assembly, heptamer of 7 subunits arranged in a ring. Interacts with the chaperonin GroEL.

The protein localises to the cytoplasm. Functionally, together with the chaperonin GroEL, plays an essential role in assisting protein folding. The GroEL-GroES system forms a nano-cage that allows encapsulation of the non-native substrate proteins and provides a physical environment optimized to promote and accelerate protein folding. GroES binds to the apical surface of the GroEL ring, thereby capping the opening of the GroEL channel. The sequence is that of Co-chaperonin GroES from Xylella fastidiosa (strain M23).